Consider the following 337-residue polypeptide: Heme A synthase (337 aa).

The next 5 membrane-spanning stretches (helical) occupy residues 6–26 (ITKW…IGGI), 87–107 (FIHR…LIYF), 119–139 (LPYI…WYMV), 154–174 (LAFH…QLIK), and 192–212 (LIFS…GALV). H256 contributes to the heme binding site. 3 helical membrane passes run 258–278 (LVGY…LKIE), 285–305 (IAYF…ITLL), and 308–328 (VPII…SIII). Residue H316 coordinates heme.

This sequence belongs to the COX15/CtaA family. Type 2 subfamily. As to quaternary structure, interacts with CtaB. The cofactor is heme b.

Its subcellular location is the cell membrane. It carries out the reaction Fe(II)-heme o + 2 A + H2O = Fe(II)-heme a + 2 AH2. Its pathway is porphyrin-containing compound metabolism; heme A biosynthesis; heme A from heme O: step 1/1. Functionally, catalyzes the conversion of heme O to heme A by two successive hydroxylations of the methyl group at C8. The first hydroxylation forms heme I, the second hydroxylation results in an unstable dihydroxymethyl group, which spontaneously dehydrates, resulting in the formyl group of heme A. In Rickettsia africae (strain ESF-5), this protein is Heme A synthase.